The chain runs to 195 residues: Transmembrane protein 126A (195 aa).

At 1–33 (MENHKSNNKENITIVDISRKINQLPEAERNLLE) the chain is on the mitochondrial matrix side. The helical transmembrane segment at 34-54 (NGSVYVGLNAALCGLIANSLF) threads the bilayer. The Mitochondrial intermembrane portion of the chain corresponds to 55 to 56 (RR). The chain crosses the membrane as a helical span at residues 57-77 (ILNVTKARIAAGLPMAGIPFL). The Mitochondrial matrix segment spans residues 78–110 (TTDLTYRCFVSFPLNTGDLDCETCTITRSGLTG). The chain crosses the membrane as a helical span at residues 111 to 131 (LVIGGLYPVFLAIPVNGGLAA). Topologically, residues 132 to 158 (RYQSALLPHKGNILSYWIRTSKPVFRK) are mitochondrial intermembrane. The helical transmembrane segment at 159 to 175 (MLFPILLQTMFSAYLGS) threads the bilayer. The Mitochondrial matrix portion of the chain corresponds to 176 to 195 (EQYKLLIKALQLSEPGKEIH).

The protein belongs to the TMEM126 family. In terms of assembly, interacts with OXA1L; promoting cotranslational quality control in mitochondria. In terms of tissue distribution, strongly expressed in brain, cerebellum, skeletal muscle, testis. High expression also found in fetal brain, fetal retinal pigmentary epithelium, and fetal retina. Highly expressed in retinal ganglion cells.

The protein resides in the mitochondrion inner membrane. Its function is as follows. Protein required for the cotranslational protein quality control in the inner membrane of the mitochondria. Associates with newly synthesized polypeptides and may act as a chaperone that cooperates with OXA1L for the insertion of newly synthesized mitochondrial proteins into the inner membrane. Required for the assembly of the ND4 module of mitochondrial complex I. The polypeptide is Transmembrane protein 126A (Homo sapiens (Human)).